A 91-amino-acid polypeptide reads, in one-letter code: Large ribosomal subunit protein eL34 (91 aa).

Residues 48–71 (RGRPVEMRKLPKTKKRPERPYPHL) form a disordered region.

It belongs to the eukaryotic ribosomal protein eL34 family.

This is Large ribosomal subunit protein eL34 (rpl34e) from Pyrococcus abyssi (strain GE5 / Orsay).